A 418-amino-acid chain; its full sequence is S-adenosylmethionine synthase (418 aa).

His-16 is a binding site for ATP. Asp-18 provides a ligand contact to Mg(2+). Glu-44 is a K(+) binding site. Residues Glu-57 and Gln-100 each coordinate L-methionine. The flexible loop stretch occupies residues Gln-100–Lys-110. Residues Asp-175 to Lys-177, Lys-251 to Phe-252, Asp-260, Arg-266 to Lys-267, Ala-283, and Lys-287 each bind ATP. L-methionine is bound at residue Asp-260. Residue Lys-291 participates in L-methionine binding.

It belongs to the AdoMet synthase family. Homotetramer; dimer of dimers. Requires Mg(2+) as cofactor. K(+) is required as a cofactor.

It is found in the cytoplasm. The catalysed reaction is L-methionine + ATP + H2O = S-adenosyl-L-methionine + phosphate + diphosphate. It functions in the pathway amino-acid biosynthesis; S-adenosyl-L-methionine biosynthesis; S-adenosyl-L-methionine from L-methionine: step 1/1. Its function is as follows. Catalyzes the formation of S-adenosylmethionine (AdoMet) from methionine and ATP. The overall synthetic reaction is composed of two sequential steps, AdoMet formation and the subsequent tripolyphosphate hydrolysis which occurs prior to release of AdoMet from the enzyme. The protein is S-adenosylmethionine synthase of Gloeothece citriformis (strain PCC 7424) (Cyanothece sp. (strain PCC 7424)).